The sequence spans 365 residues: tRNA N6-adenosine threonylcarbamoyltransferase (365 aa).

2 residues coordinate Fe cation: His122 and His126. Residues Leu147 to Gly151, Asp180, Gly193, and Asn293 each bind substrate. Asp321 contacts Fe cation. A disordered region spans residues Pro340–Ser365.

The protein belongs to the KAE1 / TsaD family. The cofactor is Fe(2+).

It localises to the cytoplasm. It carries out the reaction L-threonylcarbamoyladenylate + adenosine(37) in tRNA = N(6)-L-threonylcarbamoyladenosine(37) in tRNA + AMP + H(+). Required for the formation of a threonylcarbamoyl group on adenosine at position 37 (t(6)A37) in tRNAs that read codons beginning with adenine. Is involved in the transfer of the threonylcarbamoyl moiety of threonylcarbamoyl-AMP (TC-AMP) to the N6 group of A37, together with TsaE and TsaB. TsaD likely plays a direct catalytic role in this reaction. This Gluconobacter oxydans (strain 621H) (Gluconobacter suboxydans) protein is tRNA N6-adenosine threonylcarbamoyltransferase.